We begin with the raw amino-acid sequence, 934 residues long: Serine/threonine-protein kinase PknD (934 aa).

In terms of domain architecture, Protein kinase spans 4–296 (YELIRLIGKG…ELRQALQPYL (293 aa)). ATP-binding positions include 10-18 (IGKGGMGEV) and K33. D138 (proton acceptor) is an active-site residue.

The protein belongs to the protein kinase superfamily. Ser/Thr protein kinase family. In terms of assembly, interacts with Pkn1. Post-translationally, autophosphorylated on serine and threonine residues. Present in elementary bodies 40 hours post-infection as 2 bands of approximately 55 to 60 and 45 to 50 kDa, which may be due to differential phosphorylation as well as degradation; an enzymatically active full-length protein can also be detected.

It catalyses the reaction L-seryl-[protein] + ATP = O-phospho-L-seryl-[protein] + ADP + H(+). The catalysed reaction is L-threonyl-[protein] + ATP = O-phospho-L-threonyl-[protein] + ADP + H(+). Its function is as follows. Together with the serine/threonine kinase Pkn1, may play a role in the specific interactions with host proteins during intracellular growth. Autophosphorylates and also phosphorylates Pkn1. This Chlamydia trachomatis serovar L2 (strain ATCC VR-902B / DSM 19102 / 434/Bu) protein is Serine/threonine-protein kinase PknD.